The chain runs to 270 residues: uncharacterized protein (270 aa).

The protein to T.pallidum TP_0127, TP_0315 and TP_0618.

This is an uncharacterized protein from Treponema pallidum (strain Nichols).